A 209-amino-acid polypeptide reads, in one-letter code: Ribosomal RNA small subunit methyltransferase G (209 aa).

The S-adenosyl-L-methionine site is built by Gly-74, Phe-79, and Arg-139.

It belongs to the methyltransferase superfamily. RNA methyltransferase RsmG family.

The protein localises to the cytoplasm. It carries out the reaction guanosine(527) in 16S rRNA + S-adenosyl-L-methionine = N(7)-methylguanosine(527) in 16S rRNA + S-adenosyl-L-homocysteine. Functionally, specifically methylates the N7 position of guanine in position 527 of 16S rRNA. The chain is Ribosomal RNA small subunit methyltransferase G from Halorhodospira halophila (strain DSM 244 / SL1) (Ectothiorhodospira halophila (strain DSM 244 / SL1)).